The following is a 947-amino-acid chain: Isoleucine--tRNA ligase (947 aa).

A 'HIGH' region motif is present at residues 57–67; sequence PYANGNIHLGH. An L-isoleucyl-5'-AMP-binding site is contributed by E568. The 'KMSKS' region signature appears at 609-613; that stretch reads KMSKS. Residue K612 participates in ATP binding. Zn(2+)-binding residues include C908, C911, C926, and C929.

This sequence belongs to the class-I aminoacyl-tRNA synthetase family. IleS type 1 subfamily. In terms of assembly, monomer. Zn(2+) is required as a cofactor.

It is found in the cytoplasm. It carries out the reaction tRNA(Ile) + L-isoleucine + ATP = L-isoleucyl-tRNA(Ile) + AMP + diphosphate. Functionally, catalyzes the attachment of isoleucine to tRNA(Ile). As IleRS can inadvertently accommodate and process structurally similar amino acids such as valine, to avoid such errors it has two additional distinct tRNA(Ile)-dependent editing activities. One activity is designated as 'pretransfer' editing and involves the hydrolysis of activated Val-AMP. The other activity is designated 'posttransfer' editing and involves deacylation of mischarged Val-tRNA(Ile). The sequence is that of Isoleucine--tRNA ligase from Persephonella marina (strain DSM 14350 / EX-H1).